We begin with the raw amino-acid sequence, 492 residues long: Probable malate:quinone oxidoreductase 1 (492 aa).

Belongs to the MQO family. Requires FAD as cofactor.

The catalysed reaction is (S)-malate + a quinone = a quinol + oxaloacetate. It participates in carbohydrate metabolism; tricarboxylic acid cycle; oxaloacetate from (S)-malate (quinone route): step 1/1. This is Probable malate:quinone oxidoreductase 1 from Staphylococcus aureus (strain MW2).